Reading from the N-terminus, the 355-residue chain is Lipopolysaccharide heptosyltransferase 1 (355 aa).

Positions 186, 187, 191, 221, 260, 261, 262, and 265 each coordinate ADP-L-glycero-beta-D-manno-heptose.

It belongs to the glycosyltransferase 9 family.

The protein localises to the cell inner membrane. The enzyme catalyses an alpha-Kdo-(2-&gt;4)-alpha-Kdo-(2-&gt;6)-lipid A + ADP-L-glycero-beta-D-manno-heptose = an L-alpha-D-Hep-(1-&gt;5)-[alpha-Kdo-(2-&gt;4)]-alpha-Kdo-(2-&gt;6)-lipid A + ADP + H(+). It functions in the pathway bacterial outer membrane biogenesis; LPS core biosynthesis. Its function is as follows. Glycosyltransferase involved in the biosynthesis of the core oligosaccharide region of lipopolysaccharide (LPS). Catalyzes the addition of the first heptose unit to one 3-deoxy-D-manno-octulosonic acid (Kdo) residue of the Kdo2-lipid A module. This chain is Lipopolysaccharide heptosyltransferase 1, found in Pseudomonas aeruginosa (strain ATCC 15692 / DSM 22644 / CIP 104116 / JCM 14847 / LMG 12228 / 1C / PRS 101 / PAO1).